A 233-amino-acid chain; its full sequence is Orotidine 5'-phosphate decarboxylase (233 aa).

Residues D13, K35, 62–71 (DLKFHDIPNT), T122, R182, Q191, G211, and R212 contribute to the substrate site. K64 acts as the Proton donor in catalysis.

The protein belongs to the OMP decarboxylase family. Type 1 subfamily. As to quaternary structure, homodimer.

The catalysed reaction is orotidine 5'-phosphate + H(+) = UMP + CO2. Its pathway is pyrimidine metabolism; UMP biosynthesis via de novo pathway; UMP from orotate: step 2/2. Catalyzes the decarboxylation of orotidine 5'-monophosphate (OMP) to uridine 5'-monophosphate (UMP). This chain is Orotidine 5'-phosphate decarboxylase, found in Pseudomonas putida (strain W619).